Here is a 216-residue protein sequence, read N- to C-terminus: uncharacterized protein (216 aa).

A signal peptide spans 1–17; sequence MLKKIIILFLGMFLLSA. The N-palmitoyl cysteine moiety is linked to residue Cys-18. Cys-18 is lipidated: S-diacylglycerol cysteine. The stretch at 133–162 forms a coiled coil; sequence SDKEKKIQEELNQIKAMLRETKRDISKYTC.

It is found in the cell membrane. This is an uncharacterized protein from Rickettsia conorii (strain ATCC VR-613 / Malish 7).